We begin with the raw amino-acid sequence, 376 residues long: Homoserine dehydrogenase (376 aa).

Residues asparagine 17 and isoleucine 18 each coordinate NADP(+). Isoleucine 18 serves as a coordination point for NAD(+). Residues isoleucine 18, lysine 67, threonine 99, and lysine 123 each contribute to the NADPH site. 2 residues coordinate NADP(+): threonine 99 and lysine 123. Residue threonine 99 participates in NAD(+) binding. Na(+)-binding residues include glutamate 150, valine 153, alanine 155, and leucine 157. Serine 201 carries the phosphoserine modification. NADP(+) is bound by residues glycine 213 and glutamate 216. L-homoserine is bound by residues glutamate 216 and aspartate 227. Catalysis depends on lysine 231, which acts as the Proton donor. Glycine 349 is an NADP(+) binding site. Glycine 349 contributes to the NAD(+) binding site. Glycine 349 is an NADPH binding site.

This sequence belongs to the homoserine dehydrogenase family. The cofactor is a metal cation.

It carries out the reaction L-homoserine + NADP(+) = L-aspartate 4-semialdehyde + NADPH + H(+). The catalysed reaction is L-homoserine + NAD(+) = L-aspartate 4-semialdehyde + NADH + H(+). The protein operates within amino-acid biosynthesis; L-methionine biosynthesis via de novo pathway; L-homoserine from L-aspartate: step 3/3. It functions in the pathway amino-acid biosynthesis; L-threonine biosynthesis; L-threonine from L-aspartate: step 3/5. Catalyzes the conversion of L-aspartate-beta-semialdehyde (L-Asa) to L-homoserine (L-Hse), the third step in the biosynthesis of amino acids that derive from aspartate (the aspartate family of amino acids), including methioinine and threonine, the latter of which is a precursor to isoleucine; production of homoserine leads to a branch-point in the pathway as it can either be O-phosphorylated for processing to threonine, or O-acylated for processing to methionine. The polypeptide is Homoserine dehydrogenase (Schizosaccharomyces pombe (strain 972 / ATCC 24843) (Fission yeast)).